The primary structure comprises 748 residues: Phosphoenolpyruvate-dependent phosphotransferase system (748 aa).

In terms of domain architecture, GAF spans M1 to V127. Positions Q128 to R170 are linker. The PTS EI stretch occupies residues I171 to L748. The active-site Tele-phosphohistidine intermediate is H356. Phosphoenolpyruvate is bound by residues R462 and R498. The Mg(2+) site is built by E597 and D621. Phosphoenolpyruvate contacts are provided by residues N620 to D621 and R631. The active-site Proton donor is C668.

The protein belongs to the PEP-utilizing enzyme family. Requires Mg(2+) as cofactor.

Its subcellular location is the cytoplasm. It catalyses the reaction L-histidyl-[protein] + phosphoenolpyruvate = N(pros)-phospho-L-histidyl-[protein] + pyruvate. Its function is as follows. Component of the phosphoenolpyruvate-dependent nitrogen-metabolic phosphotransferase system (nitrogen-metabolic PTS), that seems to be involved in regulating nitrogen metabolism. Enzyme I-Ntr transfers the phosphoryl group from phosphoenolpyruvate (PEP) to the phosphoryl carrier protein (NPr). Could function in the transcriptional regulation of sigma-54 dependent operons in conjunction with the NPr (PtsO) and EIIA-Ntr (PtsN) proteins. Enzyme I-Ntr is specific for NPr. This chain is Phosphoenolpyruvate-dependent phosphotransferase system (ptsP), found in Salmonella typhimurium (strain LT2 / SGSC1412 / ATCC 700720).